The primary structure comprises 1596 residues: SET-binding protein (1596 aa).

Positions 1 to 12 (MESRETLSSSRQ) are enriched in polar residues. Disordered stretches follow at residues 1–83 (MESR…WVAG), 134–426 (KQSG…SIKA), and 475–518 (SPSV…SRKL). Over residues 64-81 (GSGRDVDSNSNADSEKWV) the composition is skewed to basic and acidic residues. Residues 164-175 (LTASDLAASDLK) are compositionally biased toward low complexity. Composition is skewed to polar residues over residues 213 to 236 (KSSS…QNCF) and 270 to 282 (AGNT…NNNK). Residues 290-306 (APSPSSHSSPAPPSSSA) show a composition bias toward low complexity. The span at 363 to 372 (DNTEGKREGY) shows a compositional bias: basic and acidic residues. The segment covering 375–395 (DSAQEASPARQNVSSASNPEN) has biased composition (polar residues). Positions 584-596 (KKKRGRPKKQPLL) form a DNA-binding region, a.T hook 1. 3 disordered regions span residues 604-624 (GTST…KKRK), 722-763 (YIGK…AVPS), and 777-796 (HPLS…ASTE). Polar residues predominate over residues 779-796 (LSTQLGGSNGNLSPASTE). An N6-acetyllysine modification is found at lysine 817. Positions 854–880 (SPVSESHSEETIPSDSGIGTDNNSTSD) are enriched in polar residues. A disordered region spans residues 854-889 (SPVSESHSEETIPSDSGIGTDNNSTSDQAEKSSESR). Residues 1016–1028 (KKKRGRPAKTNDT) constitute a DNA-binding region (a.T hook 2). 6 disordered regions span residues 1134-1164 (PPKV…DRIL), 1202-1225 (EKNK…SKNN), 1245-1300 (AKEK…GSKR), 1325-1344 (SSYD…KVDQ), 1440-1473 (QRQS…DQMP), and 1518-1596 (EAPP…EVLP). The span at 1146 to 1159 (RLHKRKHKHKHKHK) shows a compositional bias: basic residues. Residues 1450 to 1459 (VKKRRGRPRK) are compositionally biased toward basic residues. The segment at residues 1451–1463 (KKRRGRPRKQPTQ) is a DNA-binding region (a.T hook 3). 3 consecutive repeat copies span residues 1520-1527 (PPLPPPPP), 1528-1535 (PPLPPPPP), and 1536-1543 (PPLPPPPP). A 3 X 8 AA tandem repeats of P-P-L-P-P-P-P-P region spans residues 1520 to 1543 (PPLPPPPPPPLPPPPPPPLPPPPP). 2 stretches are compositionally biased toward pro residues: residues 1520 to 1546 (PPLP…PLPK) and 1560 to 1572 (PAQP…PQQP).

In terms of assembly, interacts with SET. Expressed in numerous tissues. Expressed at low levels in myeloid and monocytic cells as well as in CD34+ cells; expression levels are higher in myeloid malignancies.

It is found in the nucleus. This chain is SET-binding protein (SETBP1), found in Homo sapiens (Human).